The primary structure comprises 42 residues: Photosystem I reaction center subunit IX (42 aa).

Residues 7–27 form a helical membrane-spanning segment; sequence YLSVAPVLATLWFGSLAGLLI.

The protein belongs to the PsaJ family.

Its subcellular location is the plastid. It localises to the chloroplast thylakoid membrane. In terms of biological role, may help in the organization of the PsaE and PsaF subunits. The chain is Photosystem I reaction center subunit IX from Chloranthus spicatus (Chulantree).